Here is a 365-residue protein sequence, read N- to C-terminus: Peptide chain release factor 2 (365 aa).

Position 251 is an N5-methylglutamine (Q251).

It belongs to the prokaryotic/mitochondrial release factor family. Methylated by PrmC. Methylation increases the termination efficiency of RF2.

The protein localises to the cytoplasm. Peptide chain release factor 2 directs the termination of translation in response to the peptide chain termination codons UGA and UAA. This is Peptide chain release factor 2 from Campylobacter jejuni subsp. jejuni serotype O:2 (strain ATCC 700819 / NCTC 11168).